Reading from the N-terminus, the 835-residue chain is MDVLTRFNSGKLWDFKGGVHPPERKSQSNQKPIRHAKLVEHFYIPVVQHAGEAGNILVKVGDYVFKGQPLTQGDGLRVLPVHASTSGFIRAIAPYASAHPSGLATLCLHLEADGKDQWREQQPLDDFLTQTPEKLIEKLYQAGVAGLGGAVFPTAAKLHSAEKQVKLLIINGAECEPYITCDDRLMRDYADEIIEGTRILRYILRPEKVVIAVEDNKPEAVAALRQVLQGANDIEIRVIPTKYPSGAAKQLIQILTGMEVPSGQRSSSIGVLMQNVATAFAVKRAIMDDEPLIERVVTLTGDKVRHKGNYWVRLGTPIYQLLQQVDYHYDDRFPVFMGGPMMGFILPDLQAPVTKMTNCLLAPDHFEYAPPAPEQSCIRCSACSDACPVSLMPQQLYWFARSEDHEKSEEYALKDCIECGLCAYVCPSHIPLIQYFRQEKAKIWEIQQKAKQAEEAKQRFEARQARLAREEQERKARAQKAMEARRQEMKTAQGIDPVQAALERLKAKKTDNDSSAKVEIKTIVTEKGDILPDNSDIMAQRKARRLARQQQTQNTDVSQVETNEENKSTDSKSAVAAAIARAKAKKAAQQGSALEKDEISSSDTLSVGNDTEPVAEDPRKAAIAAAIARAKAKKAAQQGSAVEKDEISSSNTLSVGNDTEPVADDPRKVAIAAAIARAKAKKAAQQGSAVEQDEISSSDTLSIGNEAEPVADDPRKAAIAAAIARAKAKKAAQQRSAVEQDEISSSDTLSVGNETESVAEDPRKAAIAAAIARAKAKKAAQQRSAVEQDEISSSDTLSVGNETESVAEDPRKAAIAAAIARAKAKKAAKANNHDA.

4Fe-4S ferredoxin-type domains follow at residues 368–397 (YAPPAPEQSCIRCSACSDACPVSLMPQQLY) and 407–436 (KSEEYALKDCIECGLCAYVCPSHIPLIQYF). [4Fe-4S] cluster-binding residues include C377, C380, C383, C387, C416, C419, C422, and C426. Positions 468–489 (AREEQERKARAQKAMEARRQEM) are enriched in basic and acidic residues. Disordered stretches follow at residues 468–492 (AREEQERKARAQKAMEARRQEMKTA), 540–574 (QRKARRLARQQQTQNTDVSQVETNEENKSTDSKSA), 586–618 (KAAQQGSALEKDEISSSDTLSVGNDTEPVAEDP), 634–666 (KAAQQGSAVEKDEISSSNTLSVGNDTEPVADDP), 682–714 (KAAQQGSAVEQDEISSSDTLSIGNEAEPVADDP), 730–762 (KAAQQRSAVEQDEISSSDTLSVGNETESVAEDP), and 778–811 (KAAQQRSAVEQDEISSSDTLSVGNETESVAEDPR). The span at 552–561 (TQNTDVSQVE) shows a compositional bias: polar residues. The span at 648–657 (SSSNTLSVGN) shows a compositional bias: polar residues. 2 stretches are compositionally biased toward polar residues: residues 745 to 756 (SSDTLSVGNETE) and 793 to 804 (SSDTLSVGNETE).

Belongs to the 4Fe4S bacterial-type ferredoxin family. RnfC subfamily. As to quaternary structure, the complex is composed of six subunits: RnfA, RnfB, RnfC, RnfD, RnfE and RnfG. [4Fe-4S] cluster is required as a cofactor.

It is found in the cell inner membrane. In terms of biological role, part of a membrane-bound complex that couples electron transfer with translocation of ions across the membrane. This is Ion-translocating oxidoreductase complex subunit C from Pasteurella multocida (strain Pm70).